A 550-amino-acid polypeptide reads, in one-letter code: Copine-F (550 aa).

C2 domains lie at 1–115 (MAET…RLIG) and 123–246 (ITGK…PIIN). A VWFA domain is found at 296-521 (DLMVAIDCTE…DFQNEILRKL (226 aa)).

It belongs to the copine family.

This is Copine-F (cpnF) from Dictyostelium discoideum (Social amoeba).